The following is a 428-amino-acid chain: 4-hydroxy-3-methylbut-2-en-1-yl diphosphate synthase (flavodoxin) (428 aa).

[4Fe-4S] cluster contacts are provided by C315, C318, C361, and E368.

The protein belongs to the IspG family. Requires [4Fe-4S] cluster as cofactor.

The catalysed reaction is (2E)-4-hydroxy-3-methylbut-2-enyl diphosphate + oxidized [flavodoxin] + H2O + 2 H(+) = 2-C-methyl-D-erythritol 2,4-cyclic diphosphate + reduced [flavodoxin]. The protein operates within isoprenoid biosynthesis; isopentenyl diphosphate biosynthesis via DXP pathway; isopentenyl diphosphate from 1-deoxy-D-xylulose 5-phosphate: step 5/6. Converts 2C-methyl-D-erythritol 2,4-cyclodiphosphate (ME-2,4cPP) into 1-hydroxy-2-methyl-2-(E)-butenyl 4-diphosphate. This chain is 4-hydroxy-3-methylbut-2-en-1-yl diphosphate synthase (flavodoxin), found in Ralstonia pickettii (strain 12J).